The primary structure comprises 107 residues: U1-lycotoxin-Ls1b (107 aa).

Residues methionine 1–serine 20 form the signal peptide. The propeptide occupies glutamate 21–arginine 41. Cystine bridges form between cysteine 44–cysteine 59, cysteine 51–cysteine 68, cysteine 58–cysteine 86, and cysteine 70–cysteine 84.

The protein belongs to the neurotoxin 19 (CSTX) family. 04 (U1-Lctx) subfamily. Expressed by the venom gland.

Its subcellular location is the secreted. This chain is U1-lycotoxin-Ls1b, found in Lycosa singoriensis (Wolf spider).